The chain runs to 579 residues: Adenine/guanine permease AZG1 (579 aa).

The next 12 helical transmembrane spans lie at 52-72 (AGTATFLTMAYILAVNASILS), 131-151 (LIVATVAASLIGCVIMGLMAN), 183-203 (TALAAVFIEGLIFLFISAIGF), 221-241 (AGIGLFLAFIGLQNNQGIGLV), 260-280 (ISLAPVITSANGTVSLLAGGS), 292-312 (MESPTFWLGIVGFVIIAYCLV), 320-340 (IYGIVFVTAVSWFRNTEVTAF), 379-399 (FWEALVTFLYVDILDTTGTLY), 414-434 (FAGQYFAFMSDASAIVIGSLL), 459-479 (AITVAVYFLLAMFFTPLLASI), 480-500 (PAWAVGPPLILVGVMMMKSVT), and 514-534 (FVTMILMPLTYSVAYGLIGGI).

It belongs to the nucleobase:cation symporter-2 (NCS2) (TC 2.A.40) family. Azg-like subfamily.

It is found in the membrane. Transports natural purines (adenine and guanine) as well as purine analogs. Confers sensitivity to 8-azaadenine and 8-azaguanine (8-azg). This is Adenine/guanine permease AZG1 (AZG1) from Arabidopsis thaliana (Mouse-ear cress).